The following is a 139-amino-acid chain: SPbeta prophage-derived uncharacterized protein YomN (139 aa).

In Bacillus subtilis (strain 168), this protein is SPbeta prophage-derived uncharacterized protein YomN (yomN).